The primary structure comprises 164 residues: uncharacterized protein (164 aa).

The BFN domain maps to 1-129 (MGEVRVVGIR…AVLAQAGLLI (129 aa)).

This is an uncharacterized protein from Mycobacterium tuberculosis (strain CDC 1551 / Oshkosh).